Reading from the N-terminus, the 502-residue chain is MPNATEAGKATDPGHGEHTSENKSPEEGLQGAVPSFYTSASEAPIAPRGDGHYPSSCPVTHTREKIYAICSDYAFLNQATSVYKTPSLTRSACLPDNTSLSAGNTTRYIGISTSTSEIIYNEENNLENLSTGMGKLPLAWEIDKSEFDGVTTNLIHKSGNVKKQFSKKKTSDKKGRHQRECLHYSPLDDVKQRKVLDLRRWYCISRPQYKTSCGISSLISCWNFLYSIMGAGNLPPITQEEALHILGFQPPFEDIRFGPFTGNTTLMRWFRQINDHFHVKGCSYVLYKPHGKNKTAGETAPGALSKLTRGLKDESLAYIYHCQNHYFCPIGFEATPVKANKAFSRGPLSSQEVEYWILIGESSRKHPAIHCKRWADIVTDLNTQNPEFLDIRHLERGLQFRKTKKVGGNLHCIIAFQRLSWQRFGFWNFPFGTITQESQHPTHVPGIAKSESEDNISKKQHGRLGRSFSASFHQDSAWKNMSSIHERRNSGYHSFRDYNGND.

Disordered regions lie at residues 1-32 (MPNA…LQGA) and 438-460 (SQHP…SKKQ). A compositionally biased stretch (basic and acidic residues) spans 12-26 (DPGHGEHTSENKSPE).

The protein belongs to the BIVM family.

It localises to the cytoplasm. The protein localises to the nucleus. In Mus musculus (Mouse), this protein is Basic immunoglobulin-like variable motif-containing protein (Bivm).